A 60-amino-acid chain; its full sequence is Cytotoxin SP15c (60 aa).

4 disulfide bridges follow: Cys3/Cys21, Cys14/Cys38, Cys42/Cys53, and Cys54/Cys59.

This sequence belongs to the three-finger toxin family. Short-chain subfamily. Type IA cytotoxin sub-subfamily. As to quaternary structure, monomer in solution; Homodimer and oligomer in the presence of negatively charged lipids forming a pore with a size ranging between 20 and 30 Angstroms. As to expression, expressed by the venom gland.

The protein localises to the secreted. It is found in the target cell membrane. Shows cytolytic activity on many different cells by forming pore in lipid membranes. In vivo, increases heart rate or kills the animal by cardiac arrest. In addition, it binds to heparin with high affinity, interacts with Kv channel-interacting protein 1 (KCNIP1) in a calcium-independent manner, and binds to integrin alpha-V/beta-3 (ITGAV/ITGB3) with moderate affinity. This chain is Cytotoxin SP15c, found in Naja atra (Chinese cobra).